The sequence spans 143 residues: Ribonuclease H (143 aa).

Residues 1-136 form the RNase H type-1 domain; it reads MQEIEIFCDG…CDSLAKLEAQ (136 aa). Positions 9, 47, 69, and 128 each coordinate Mg(2+).

It belongs to the RNase H family. In terms of assembly, monomer. Mg(2+) is required as a cofactor.

Its subcellular location is the cytoplasm. It catalyses the reaction Endonucleolytic cleavage to 5'-phosphomonoester.. In terms of biological role, endonuclease that specifically degrades the RNA of RNA-DNA hybrids. The sequence is that of Ribonuclease H from Helicobacter pylori (strain HPAG1).